Consider the following 402-residue polypeptide: Cholinephosphotransferase 1 (402 aa).

At 1–62 (MGLAEGLAAR…LVEKVPLWLA (62 aa)) the chain is on the cytoplasmic side. A helical transmembrane segment spans residues 63–83 (PNTITMVGLLLNVLSTLILVC). Asn64 lines the CDP-choline pocket. Topologically, residues 84–93 (YCPTATEGAP) are lumenal. Residues 94–118 (FWTYLLCAIGLFVYQSLDAIDGKQA) form a helical membrane-spanning segment. Mg(2+)-binding residues include Asp111 and Asp114. Arg119 is a binding site for CDP-choline. Over 119–125 (RRTNSSS) the chain is Cytoplasmic. Residues 126 to 150 (PLGEMFDHGCDSISIVFVNLGTIAA) form a helical membrane-spanning segment. A Mg(2+)-binding site is contributed by Asp132. Residue His133 is the Proton acceptor of the active site. Asp136 is a Mg(2+) binding site. Over 151-160 (VRLGTLPGWM) the chain is Lumenal. The chain crosses the membrane as a helical span at residues 161–179 (FYCCFVGMFMFYCAQWQTY). Residues 180–190 (VCGTLKFGIID) lie on the Cytoplasmic side of the membrane. Residues 191–207 (VTELQISVTVMFLMTAV) traverse the membrane as a helical segment. Topologically, residues 208 to 222 (CGPELWDYEIPFTGL) are lumenal. The helical transmembrane segment at 223-248 (PMKTIPLLGIIGGTVYSCSNYFRVIL) threads the bilayer. The Cytoplasmic portion of the chain corresponds to 249–265 (SGGVGKNGSTVAGTSVL). The chain crosses the membrane as a helical span at residues 266-281 (SPGLHIGLVLLLALMI). At 282-293 (YKKSTTNLFLQN) the chain is on the lumenal side. The chain crosses the membrane as a helical span at residues 294–316 (PCLYTLAFGFVSAKITIKLVIAH). The Cytoplasmic portion of the chain corresponds to 317 to 329 (MTKSEISLQDTAF). The chain crosses the membrane as a helical span at residues 330–339 (IGPGLLFFNQ). At 340–346 (YFNSFID) the chain is on the lumenal side. Residues 347–376 (EYIVLWIAMVISFADLLRYCISVCLQIATH) traverse the membrane as a helical segment. Residues 377 to 402 (LRISVFRISSNQAAEQVQTQKQKLTD) are Cytoplasmic-facing.

It belongs to the CDP-alcohol phosphatidyltransferase class-I family. Homodimer. Mg(2+) is required as a cofactor. It depends on Mn(2+) as a cofactor.

The protein localises to the golgi apparatus membrane. It catalyses the reaction CDP-choline + a 1,2-diacyl-sn-glycerol = a 1,2-diacyl-sn-glycero-3-phosphocholine + CMP + H(+). The catalysed reaction is 1,2-dioctanoyl-sn-glycerol + CDP-choline = 1,2-dioctanoyl-sn-glycero-3-phosphocholine + CMP + H(+). The enzyme catalyses 1-octadecanoyl-2-(5Z,8Z,11Z,14Z-eicosatetraenoyl)-sn-glycerol + CDP-choline = 1-octadecanoyl-2-(5Z,8Z,11Z,14Z-eicosatetraenoyl)-sn-glycero-3-phosphocholine + CMP + H(+). It carries out the reaction 1-hexadecanoyl-2-(9Z-octadecenoyl)-sn-glycerol + CDP-choline = 1-hexadecanoyl-2-(9Z-octadecenoyl)-sn-glycero-3-phosphocholine + CMP + H(+). It catalyses the reaction 1-hexadecanoyl-2-(4Z,7Z,10Z,13Z,16Z,19Z-docosahexaenoyl)-sn-glycerol + CDP-choline = 1-hexadecanoyl-2-(4Z,7Z,10Z,13Z,16Z,19Z-docosahexaenoyl)-sn-glycero-3-phosphocholine + CMP + H(+). It participates in phospholipid metabolism; phosphatidylcholine biosynthesis; phosphatidylcholine from phosphocholine: step 2/2. In terms of biological role, catalyzes the final step of de novo phosphatidylcholine (PC) synthesis, i.e. the transfer of choline phosphate from CDP-choline to the free hydroxyl of a diacylglycerol (DAG), producing a PC. It thereby plays a central role in the formation and maintenance of vesicular membranes. Shows a high preference for CDP-choline over CDP-ethanolamine as substrate. This chain is Cholinephosphotransferase 1 (chpt1), found in Xenopus laevis (African clawed frog).